A 188-amino-acid polypeptide reads, in one-letter code: Elongation factor P (188 aa).

It belongs to the elongation factor P family.

It localises to the cytoplasm. It participates in protein biosynthesis; polypeptide chain elongation. Its function is as follows. Involved in peptide bond synthesis. Stimulates efficient translation and peptide-bond synthesis on native or reconstituted 70S ribosomes in vitro. Probably functions indirectly by altering the affinity of the ribosome for aminoacyl-tRNA, thus increasing their reactivity as acceptors for peptidyl transferase. The polypeptide is Elongation factor P (Wolbachia pipientis wMel).